A 290-amino-acid polypeptide reads, in one-letter code: Light-independent protochlorophyllide reductase iron-sulfur ATP-binding protein (290 aa).

ATP is bound by residues 10-15 (GIGKST) and lysine 39. Serine 14 provides a ligand contact to Mg(2+). The [4Fe-4S] cluster site is built by cysteine 95 and cysteine 129. 180-181 (NR) contacts ATP.

The protein belongs to the NifH/BchL/ChlL family. In terms of assembly, homodimer. Protochlorophyllide reductase is composed of three subunits; ChlL, ChlN and ChlB. The cofactor is [4Fe-4S] cluster.

Its subcellular location is the plastid. It is found in the chloroplast. The enzyme catalyses chlorophyllide a + oxidized 2[4Fe-4S]-[ferredoxin] + 2 ADP + 2 phosphate = protochlorophyllide a + reduced 2[4Fe-4S]-[ferredoxin] + 2 ATP + 2 H2O. Its pathway is porphyrin-containing compound metabolism; chlorophyll biosynthesis (light-independent). In terms of biological role, component of the dark-operative protochlorophyllide reductase (DPOR) that uses Mg-ATP and reduced ferredoxin to reduce ring D of protochlorophyllide (Pchlide) to form chlorophyllide a (Chlide). This reaction is light-independent. The L component serves as a unique electron donor to the NB-component of the complex, and binds Mg-ATP. This is Light-independent protochlorophyllide reductase iron-sulfur ATP-binding protein from Porphyra purpurea (Red seaweed).